Consider the following 650-residue polypeptide: Acetyl-coenzyme A synthetase (650 aa).

CoA is bound by residues 191–194, Thr-311, and Asn-335; that span reads RGGR. ATP-binding positions include 387-389, 411-416, Asp-500, and Arg-515; these read GEP and DTWWQT. Ser-523 is a binding site for CoA. ATP is bound at residue Arg-526. The Mg(2+) site is built by Val-537, His-539, and Val-542. Position 584 (Arg-584) interacts with CoA. At Lys-609 the chain carries N6-acetyllysine.

Belongs to the ATP-dependent AMP-binding enzyme family. Requires Mg(2+) as cofactor. In terms of processing, acetylated. Deacetylation by the SIR2-homolog deacetylase activates the enzyme.

It catalyses the reaction acetate + ATP + CoA = acetyl-CoA + AMP + diphosphate. Its function is as follows. Catalyzes the conversion of acetate into acetyl-CoA (AcCoA), an essential intermediate at the junction of anabolic and catabolic pathways. AcsA undergoes a two-step reaction. In the first half reaction, AcsA combines acetate with ATP to form acetyl-adenylate (AcAMP) intermediate. In the second half reaction, it can then transfer the acetyl group from AcAMP to the sulfhydryl group of CoA, forming the product AcCoA. The polypeptide is Acetyl-coenzyme A synthetase (Shewanella sediminis (strain HAW-EB3)).